Reading from the N-terminus, the 92-residue chain is DNA/RNA-binding protein Alba (92 aa).

An N6-acetyllysine modification is found at Lys11.

The protein belongs to the histone-like Alba family. Post-translationally, acetylated. Acetylation at Lys-11 decreases DNA-binding affinity.

It localises to the cytoplasm. It is found in the chromosome. Binds double-stranded DNA tightly but without sequence specificity. Involved in DNA compaction. The sequence is that of DNA/RNA-binding protein Alba from Pyrobaculum calidifontis (strain DSM 21063 / JCM 11548 / VA1).